The following is a 169-amino-acid chain: Succinate dehydrogenase cytochrome b560 subunit, mitochondrial (169 aa).

Residues 1 to 29 (MAALLLRHVGRHCLRAHLSPQLCIRNAVP) constitute a mitochondrion transit peptide. Over 30–62 (LGTTAKEEMERFWSKNTTLNRPLSPHISIYGWS) the chain is Mitochondrial matrix. The chain crosses the membrane as a helical span at residues 63–92 (LPMAMSICHRGTGIALSAGVSLFGLSALLV). Residues 93-112 (PGSFESHLEFVKSLCLGPAL) lie on the Mitochondrial intermembrane side of the membrane. Residues 113–137 (IHTAKFALVFPLMYHTWNGIRHLMW) traverse the membrane as a helical segment. A heme b-binding site is contributed by His-127. The Mitochondrial matrix segment spans residues 138–144 (DLGKGLT). A helical transmembrane segment spans residues 145 to 166 (ISQLHQSGVAVLVLTVLSSVGL). At 167-169 (AAM) the chain is on the mitochondrial intermembrane side.

It belongs to the cytochrome b560 family. In terms of assembly, component of complex II composed of four subunits: the flavoprotein (FP) SDHA, iron-sulfur protein (IP) SDHB, and a cytochrome b560 composed of SDHC and SDHD. The cofactor is heme b. In terms of processing, the N-terminus is blocked.

The protein localises to the mitochondrion inner membrane. It participates in carbohydrate metabolism; tricarboxylic acid cycle. In terms of biological role, membrane-anchoring subunit of succinate dehydrogenase (SDH) that is involved in complex II of the mitochondrial electron transport chain and is responsible for transferring electrons from succinate to ubiquinone (coenzyme Q). SDH also oxidizes malate to the non-canonical enol form of oxaloacetate, enol-oxaloacetate. Enol-oxaloacetate, which is a potent inhibitor of the succinate dehydrogenase activity, is further isomerized into keto-oxaloacetate. The protein is Succinate dehydrogenase cytochrome b560 subunit, mitochondrial (SDHC) of Bos taurus (Bovine).